A 200-amino-acid polypeptide reads, in one-letter code: Probable nicotinate-nucleotide adenylyltransferase (200 aa).

It belongs to the NadD family.

The catalysed reaction is nicotinate beta-D-ribonucleotide + ATP + H(+) = deamido-NAD(+) + diphosphate. Its pathway is cofactor biosynthesis; NAD(+) biosynthesis; deamido-NAD(+) from nicotinate D-ribonucleotide: step 1/1. Its function is as follows. Catalyzes the reversible adenylation of nicotinate mononucleotide (NaMN) to nicotinic acid adenine dinucleotide (NaAD). The polypeptide is Probable nicotinate-nucleotide adenylyltransferase (Clostridium novyi (strain NT)).